Here is a 467-residue protein sequence, read N- to C-terminus: A-type ATP synthase subunit B (467 aa).

The interval 95–114 (GKGQPRDHMPLPPPEDFRDV) is disordered.

It belongs to the ATPase alpha/beta chains family. In terms of assembly, has multiple subunits with at least A(3), B(3), C, D, E, F, H, I and proteolipid K(x).

The protein resides in the cell membrane. Functionally, component of the A-type ATP synthase that produces ATP from ADP in the presence of a proton gradient across the membrane. The B chain is a regulatory subunit. This is A-type ATP synthase subunit B from Pyrobaculum neutrophilum (strain DSM 2338 / JCM 9278 / NBRC 100436 / V24Sta) (Thermoproteus neutrophilus).